The primary structure comprises 154 residues: Dau c 1 isoallergen Dau c 1.0301 (154 aa).

Belongs to the BetVI family. As to expression, expressed in roots.

This Daucus carota (Wild carrot) protein is Dau c 1 isoallergen Dau c 1.0301.